We begin with the raw amino-acid sequence, 356 residues long: D-alanine--D-alanine ligase (356 aa).

In terms of domain architecture, ATP-grasp spans 134–339 (KQLFEHRGLP…YPELITKLIE (206 aa)). 167–222 (NDKLNYPVFVKPANLGSSVGISKCNNEAELKEGIKEAFQFDRKLVIEQGVNAREIE) contacts ATP. Mg(2+)-binding residues include aspartate 293, glutamate 306, and asparagine 308.

Belongs to the D-alanine--D-alanine ligase family. It depends on Mg(2+) as a cofactor. Mn(2+) is required as a cofactor.

The protein localises to the cytoplasm. The catalysed reaction is 2 D-alanine + ATP = D-alanyl-D-alanine + ADP + phosphate + H(+). The protein operates within cell wall biogenesis; peptidoglycan biosynthesis. Functionally, cell wall formation. This is D-alanine--D-alanine ligase from Staphylococcus aureus (strain Mu3 / ATCC 700698).